Here is a 265-residue protein sequence, read N- to C-terminus: Transcription factor BHLH062 (265 aa).

Residues 1–26 (MVPRDRVNAAAAGGGGEGRLVQSGIV) are disordered. Positions 35-48 (PKRIHKSEREKLKR) are basic motif; degenerate. The region spanning 35–85 (PKRIHKSEREKLKRDKQNDLFNELGNLLEPDRQNNGKACVLGETTRILKDL) is the bHLH domain. Residues 49-85 (DKQNDLFNELGNLLEPDRQNNGKACVLGETTRILKDL) form a helix-loop-helix motif region. A coiled-coil region spans residues 75-130 (LGETTRILKDLLSQVESLRKENSSLKNESHYVALERNELHDDNSMLRTEILELQNE). The tract at residues 200–265 (ESATSEDSEP…TNEEDRIGRS (66 aa)) is disordered. Over residues 210-220 (SQEHGISDHVT) the composition is skewed to basic and acidic residues. Residues 245 to 256 (QDQQCSSGTSGT) are compositionally biased toward polar residues.

It belongs to the bHLH protein family. Interacts with TIFY11A/JAZ9.

It is found in the nucleus. In terms of biological role, transcription factor that plays a positive role in salt stress tolerance. Interacts with TIFY11A/JAZ9 and binds to the promoter of some potassium ion transporter genes to regulate potassium homeostasis during salt stress. The sequence is that of Transcription factor BHLH062 from Oryza sativa subsp. japonica (Rice).